Consider the following 367-residue polypeptide: tRNA uridine(34) hydroxylase (367 aa).

Residues 159 to 249 (EDKNSIVVDV…GIISYAHEIS (91 aa)) form the Rhodanese domain. The active-site Cysteine persulfide intermediate is cysteine 213.

The protein belongs to the TrhO family.

The enzyme catalyses uridine(34) in tRNA + AH2 + O2 = 5-hydroxyuridine(34) in tRNA + A + H2O. Functionally, catalyzes oxygen-dependent 5-hydroxyuridine (ho5U) modification at position 34 in tRNAs. The protein is tRNA uridine(34) hydroxylase of Leptospira borgpetersenii serovar Hardjo-bovis (strain L550).